The chain runs to 297 residues: MAKQLRGVMAALLTPFNTQQALDKESLRRLVQFNMQQGIDGLYVGGSTGEAFVQSLSEREQVLEIVAEEAKGKITLIAHVGCVSTAESQQLAASASRFGFDAVSAVTPFYYPFSFEEHCDHYRAIIDSADGLPMVVYNIPALSGVKLTLDQINTLVTLPGVGALKQTSGDLFQMEQIRRAHPDLVLYNGYDEIFASGLLAGADGGIGSTYNIMGWRYQAIAKAIREGDNATAQRLQSECNKVIDLLIKVGVFRGLKTVLHYMDVVSVPLCRKPFAPVAEPYLPELKALAKQLMVEKA.

Residues serine 47 and threonine 48 each contribute to the aceneuramate site. Tyrosine 137 serves as the catalytic Proton donor. Catalysis depends on lysine 165, which acts as the Schiff-base intermediate with substrate. Aceneuramate-binding residues include threonine 167, glycine 189, aspartate 191, glutamate 192, and serine 208.

Belongs to the DapA family. NanA subfamily. Homotetramer.

It is found in the cytoplasm. The enzyme catalyses aceneuramate = aldehydo-N-acetyl-D-mannosamine + pyruvate. It functions in the pathway amino-sugar metabolism; N-acetylneuraminate degradation; D-fructose 6-phosphate from N-acetylneuraminate: step 1/5. Functionally, catalyzes the reversible aldol cleavage of N-acetylneuraminic acid (sialic acid; Neu5Ac) to form pyruvate and N-acetylmannosamine (ManNAc) via a Schiff base intermediate. The sequence is that of N-acetylneuraminate lyase from Enterobacter sp. (strain 638).